A 91-amino-acid polypeptide reads, in one-letter code: Small ribosomal subunit protein uS15 (91 aa).

It belongs to the universal ribosomal protein uS15 family. Part of the 30S ribosomal subunit. Forms a bridge to the 50S subunit in the 70S ribosome, contacting the 23S rRNA.

Functionally, one of the primary rRNA binding proteins, it binds directly to 16S rRNA where it helps nucleate assembly of the platform of the 30S subunit by binding and bridging several RNA helices of the 16S rRNA. Forms an intersubunit bridge (bridge B4) with the 23S rRNA of the 50S subunit in the ribosome. The protein is Small ribosomal subunit protein uS15 of Rickettsia akari (strain Hartford).